A 392-amino-acid chain; its full sequence is MRRSTHTRRRLLLGGLGLLGLGSLLAWTSLPFGAQPVSTVAVTRADIESSVTALGTLQPRRYVDVGAQASGQIRNLHVEVGDQVHKGQLLVEIDPSTQQAKLDAGRFSIDNLKAQLAEQRAQLKLAQQQLKRQRDLAAVGATREEDLQTAEAQLNVTQARIDMYQAQIRQANASLRSDEAELGYTRIFAPMDGTVVAVDAREGQTLNAQQQTPLILRIAKLSPMTVWAQVSEADIGKIQPGMTAYFTTLAGGKRRWTSTVRQVLPIPPKPLDQTSQGGGSPASATAGATGSQVVQYTVLLDVDNPDGALMAEMTTQVFFVVGQASQVLSAPLAALDDSDNEGLRLAQVFGRDGKVEQRKVRTGLSDRLRVQILDGLSEGDRLVIGAPAASGG.

The tat-type signal signal peptide spans methionine 1 to proline 36. The stretch at isoleucine 109–glutamate 181 forms a coiled coil. The interval proline 267–alanine 286 is disordered.

Belongs to the membrane fusion protein (MFP) (TC 8.A.1) family. As to quaternary structure, part of the tripartite efflux system PvdRT-OpmQ, which is composed of an inner membrane component with both ATPase and permease domains, PvdT, a periplasmic membrane fusion protein, PvdR, and an outer membrane component, OpmQ. In terms of processing, predicted to be exported by the Tat system. The position of the signal peptide cleavage has not been experimentally proven.

It is found in the periplasm. Functionally, part of the tripartite efflux system PvdRT-OpmQ required for the secretion into the extracellular milieu of the siderophore pyoverdine (PVD), which is involved in iron acquisition. This subunit is an adapter protein that stimulates the ATPase activity of PvdT and connects the inner and outer membrane components. The system is responsible for export of newly synthesized PVD after the final steps of biosynthesis have taken place in the periplasm. It is also responsible for recycling of PVD after internalization of ferri-PVD into the periplasm by the outer-membrane receptor FpvA and release of iron from PVD, thus making PVD available for new cycles of iron uptake. Contributes to resistance against ampicillin. The polypeptide is Pyoverdine export membrane fusion protein PvdR (Pseudomonas putida (strain ATCC 47054 / DSM 6125 / CFBP 8728 / NCIMB 11950 / KT2440)).